The following is a 107-amino-acid chain: MDKVNNNCCCGENAKPCCTDPNSGCCCVSETNNCCKSDKKECCTGTGEGCKCTGCKCCEPAKSGCCCGDKAKACCTDPNSGCCCSSKTNKCCDSTNKTECKTCECCK.

Residues 1 to 2 (MD) constitute a propeptide that is removed on maturation.

The protein belongs to the metallothionein superfamily. Type 7 family.

Its function is as follows. The metallothioneins are involved in the cellular sequestration of toxic metal ions. Binds 12 cadmium ions per molecule. The protein is Metallothionein-1 of Tetrahymena pyriformis.